The chain runs to 715 residues: ATP-dependent zinc metalloprotease YME1L1 (715 aa).

Positions 31-54 (VSVNTSASPKQHRDTVAEHEAPSS) are disordered. Residues 41-52 (QHRDTVAEHEAP) show a composition bias toward basic and acidic residues. Residues 238–258 (ILFVLLLFGIYGLLKNPFLSV) form a helical membrane-spanning segment. ATP contacts are provided by Val-283, Thr-325, Gly-326, Lys-327, Thr-328, and Leu-329. His-541 provides a ligand contact to Zn(2+). The active site involves Glu-542. Zn(2+) is bound by residues His-545 and Asp-619.

It in the N-terminal section; belongs to the AAA ATPase family. This sequence in the C-terminal section; belongs to the peptidase M41 family. As to quaternary structure, homohexamer; may also form heterohexamers. Exists in several complexes of 600-1100 kDa. Interacts with AFG1L. Zn(2+) serves as cofactor. Proteolytically processed by mitochondrial processing peptidase (MPP) to generate the mature form. Degraded in an OMA1-dependent manner in response to oxidative stress.

Its subcellular location is the mitochondrion inner membrane. It is found in the mitochondrion. The catalysed reaction is ATP + H2O = ADP + phosphate + H(+). In terms of biological role, ATP-dependent metalloprotease that catalyzes the degradation of folded and unfolded proteins with a suitable degron sequence in the mitochondrial intermembrane region. Plays an important role in regulating mitochondrial morphology and function by cleaving OPA1 at position S2, giving rise to a form of OPA1 that promotes maintenance of normal mitochondrial structure and mitochondrial protein metabolism. Ensures cell proliferation, maintains normal cristae morphology and complex I respiration activity, promotes antiapoptotic activity and protects mitochondria from the accumulation of oxidatively damaged membrane proteins. Required to control the accumulation of nonassembled respiratory chain subunits (NDUFB6, OX4 and ND1). Involved in the mitochondrial adaptation in response to various signals, such as stress or developmental cues, by mediating degradation of mitochondrial proteins to rewire the mitochondrial proteome. Catalyzes degradation of mitochondrial proteins, such as translocases, lipid transfer proteins and metabolic enzymes in response to nutrient starvation in order to limit mitochondrial biogenesis: mechanistically, YME1L is activated by decreased phosphatidylethanolamine levels caused by LPIN1 activity in response to mTORC1 inhibition. Acts as a regulator of adult neural stem cell self-renewal by promoting mitochondrial proteome rewiring, preserving neural stem and progenitor cells self-renewal. Required for normal, constitutive degradation of PRELID1. Catalyzes the degradation of OMA1 in response to membrane depolarization. Mediates degradation of TIMM17A downstream of the integrated stress response (ISR). Catalyzes degradation of MICU1 when MICU1 is not assembled via an interchain disulfide. This is ATP-dependent zinc metalloprotease YME1L1 (Yme1l1) from Rattus norvegicus (Rat).